A 283-amino-acid chain; its full sequence is Phosphatidylserine decarboxylase proenzyme (283 aa).

Active-site charge relay system; for autoendoproteolytic cleavage activity residues include aspartate 88, histidine 145, and serine 248. Serine 248 serves as the catalytic Schiff-base intermediate with substrate; via pyruvic acid; for decarboxylase activity. Pyruvic acid (Ser); by autocatalysis is present on serine 248.

The protein belongs to the phosphatidylserine decarboxylase family. PSD-B subfamily. Prokaryotic type I sub-subfamily. Heterodimer of a large membrane-associated beta subunit and a small pyruvoyl-containing alpha subunit. It depends on pyruvate as a cofactor. In terms of processing, is synthesized initially as an inactive proenzyme. Formation of the active enzyme involves a self-maturation process in which the active site pyruvoyl group is generated from an internal serine residue via an autocatalytic post-translational modification. Two non-identical subunits are generated from the proenzyme in this reaction, and the pyruvate is formed at the N-terminus of the alpha chain, which is derived from the carboxyl end of the proenzyme. The autoendoproteolytic cleavage occurs by a canonical serine protease mechanism, in which the side chain hydroxyl group of the serine supplies its oxygen atom to form the C-terminus of the beta chain, while the remainder of the serine residue undergoes an oxidative deamination to produce ammonia and the pyruvoyl prosthetic group on the alpha chain. During this reaction, the Ser that is part of the protease active site of the proenzyme becomes the pyruvoyl prosthetic group, which constitutes an essential element of the active site of the mature decarboxylase.

It localises to the cell membrane. It carries out the reaction a 1,2-diacyl-sn-glycero-3-phospho-L-serine + H(+) = a 1,2-diacyl-sn-glycero-3-phosphoethanolamine + CO2. It participates in phospholipid metabolism; phosphatidylethanolamine biosynthesis; phosphatidylethanolamine from CDP-diacylglycerol: step 2/2. Functionally, catalyzes the formation of phosphatidylethanolamine (PtdEtn) from phosphatidylserine (PtdSer). The sequence is that of Phosphatidylserine decarboxylase proenzyme from Variovorax paradoxus (strain S110).